The following is a 115-amino-acid chain: Large ribosomal subunit protein uL24 (115 aa).

2 disordered regions span residues 45-77 and 96-115; these read VRQS…STGK and KASG…KAAS.

The protein belongs to the universal ribosomal protein uL24 family. As to quaternary structure, part of the 50S ribosomal subunit.

Functionally, one of two assembly initiator proteins, it binds directly to the 5'-end of the 23S rRNA, where it nucleates assembly of the 50S subunit. Its function is as follows. One of the proteins that surrounds the polypeptide exit tunnel on the outside of the subunit. This chain is Large ribosomal subunit protein uL24, found in Rhodopirellula baltica (strain DSM 10527 / NCIMB 13988 / SH1).